The primary structure comprises 456 residues: Methylenetetrahydrofolate--tRNA-(uracil-5-)-methyltransferase TrmFO (456 aa).

7-12 lines the FAD pocket; that stretch reads GAGLAG.

Belongs to the MnmG family. TrmFO subfamily. The cofactor is FAD.

It is found in the cytoplasm. The catalysed reaction is uridine(54) in tRNA + (6R)-5,10-methylene-5,6,7,8-tetrahydrofolate + NADH + H(+) = 5-methyluridine(54) in tRNA + (6S)-5,6,7,8-tetrahydrofolate + NAD(+). It carries out the reaction uridine(54) in tRNA + (6R)-5,10-methylene-5,6,7,8-tetrahydrofolate + NADPH + H(+) = 5-methyluridine(54) in tRNA + (6S)-5,6,7,8-tetrahydrofolate + NADP(+). In terms of biological role, catalyzes the folate-dependent formation of 5-methyl-uridine at position 54 (M-5-U54) in all tRNAs. This is Methylenetetrahydrofolate--tRNA-(uracil-5-)-methyltransferase TrmFO from Synechococcus sp. (strain RCC307).